The sequence spans 932 residues: Glycine dehydrogenase (decarboxylating) (932 aa).

At Lys685 the chain carries N6-(pyridoxal phosphate)lysine.

It belongs to the GcvP family. In terms of assembly, the glycine cleavage system is composed of four proteins: P, T, L and H. Pyridoxal 5'-phosphate serves as cofactor.

It catalyses the reaction N(6)-[(R)-lipoyl]-L-lysyl-[glycine-cleavage complex H protein] + glycine + H(+) = N(6)-[(R)-S(8)-aminomethyldihydrolipoyl]-L-lysyl-[glycine-cleavage complex H protein] + CO2. The glycine cleavage system catalyzes the degradation of glycine. The P protein binds the alpha-amino group of glycine through its pyridoxal phosphate cofactor; CO(2) is released and the remaining methylamine moiety is then transferred to the lipoamide cofactor of the H protein. The polypeptide is Glycine dehydrogenase (decarboxylating) (Brucella suis (strain ATCC 23445 / NCTC 10510)).